The chain runs to 93 residues: Defensin-like protein 229 (93 aa).

A signal peptide spans 1–19 (MKSTTLFMVSCVLIFCVLS). 4 disulfide bridges follow: cysteine 38-cysteine 93, cysteine 48-cysteine 72, cysteine 56-cysteine 84, and cysteine 70-cysteine 86.

Belongs to the DEFL family. Flower buds.

Its subcellular location is the secreted. The polypeptide is Defensin-like protein 229 (SCRL27) (Arabidopsis thaliana (Mouse-ear cress)).